A 585-amino-acid polypeptide reads, in one-letter code: Nitrogen permease regulator 3-like protein (585 aa).

The interval 117 to 157 (GEWAKRRKPRTTVESNASSSHLVSKPESSHPSTGSFEVKSS) is disordered. Residues 128-138 (TVESNASSSHL) are compositionally biased toward polar residues. A compositionally biased stretch (low complexity) spans 148–157 (STGSFEVKSS).

Belongs to the NPR3 family.

In Schizosaccharomyces pombe (strain 972 / ATCC 24843) (Fission yeast), this protein is Nitrogen permease regulator 3-like protein.